The sequence spans 786 residues: Cyclin-F (786 aa).

A Nuclear localization signal 1 motif is present at residues 20 to 28 (KRRIRRRPR). The F-box domain maps to 29-76 (NLTILSLPEDVLFHILKWLSVEDILAVRAVHSQLKDLVDNHASVWACA). A Cyclin N-terminal domain is found at 288 to 405 (QASQAVSKQQ…EIVSALEGKI (118 aa)). Short sequence motifs (d box) lie at residues 310-313 (RYIL), 343-346 (RRRL), 349-352 (RYRL), and 351-354 (RLQL). Disordered regions lie at residues 564 to 593 (SPSG…TAEL) and 675 to 738 (TQIP…HTQP). The Nuclear localization signal 2 signature appears at 568 to 574 (RRTKRKR). The interval 582 to 766 (RGSFVTTPTA…ESSVPQQQVK (185 aa)) is PEST. Positions 697–714 (VTTSGYSSVSTASPTSSV) are enriched in low complexity. A compositionally biased stretch (polar residues) spans 723–738 (QPTSVLSLDSDSHTQP). Residues 767–770 (RINL) carry the D box 5 motif.

It belongs to the cyclin family. Cyclin AB subfamily. In terms of assembly, component of the SCF(CCNF) complex consisting of CUL1, RBX1, SKP1 and CCNF. Interacts with SKP1. Interacts with CUL1. Interacts with CCNB1; interaction is required for nuclear localization of CCNB1. Interacts with CCP110; this interaction leads to CCP110 ubiquitination and degradation via the proteasome pathway. Interacts (via the Cyclin N-terminal domain) with MYBL2/BMYB. Interacts with FZR1/CDH1 (via N-terminus). Interacts with RRM2 (via Cy motif and when phosphorylated at 'Thr-33'); the interaction occurs exclusively in G2 and early M. Interacts with CDC6 (via Cy motif); the interaction takes place during G2 and M phase. In terms of processing, degraded when the spindle assembly checkpoint is activated during the G2-M transition. Degradation depends on the C-terminal PEST sequence. Post-translationally, phosphorylated just before cells enter into mitosis. Ubiquitinated by the anaphase-promoting complex (APC/C); leading to its degradation by the proteasome. In terms of tissue distribution, widely expressed, with expression detected in the heart, brain, placenta, lung, liver, skeletal muscle, kidney and pancreas.

It localises to the nucleus. The protein localises to the cytoplasm. The protein resides in the perinuclear region. It is found in the cytoskeleton. Its subcellular location is the microtubule organizing center. It localises to the centrosome. The protein localises to the centriole. In terms of biological role, substrate recognition component of a SCF (SKP1-CUL1-F-box protein) E3 ubiquitin-protein ligase complex which mediates the ubiquitination and subsequent proteasomal degradation of target proteins. The SCF(CCNF) E3 ubiquitin-protein ligase complex is an integral component of the ubiquitin proteasome system (UPS) and links proteasome degradation to the cell cycle. Mediates the substrate recognition and the proteasomal degradation of various target proteins involved in the regulation of cell cycle progression and in the maintenance of genome stability. Mediates the ubiquitination and proteasomal degradation of CP110 during G2 phase, thereby acting as an inhibitor of centrosome reduplication. In G2, mediates the ubiquitination and subsequent degradation of ribonucleotide reductase RRM2, thereby maintaining a balanced pool of dNTPs and genome integrity. In G2, mediates the ubiquitination and proteasomal degradation of CDC6, thereby suppressing DNA re-replication and preventing genome instability. Involved in the ubiquitination and degradation of the substrate adapter CDH1 of the anaphase-promoting complex (APC/C), thereby acting as an antagonist of APC/C in regulating G1 progression and S phase entry. May play a role in the G2 cell cycle checkpoint control after DNA damage, possibly by promoting the ubiquitination of MYBL2/BMYB. In Homo sapiens (Human), this protein is Cyclin-F (CCNF).